Consider the following 1416-residue polypeptide: Uveal autoantigen with coiled-coil domains and ankyrin repeats (1416 aa).

An N-acetylmethionine modification is found at M1. The segment at 1–24 (MKSLKSRLRRQDVPGPASSGAAAA) is disordered. ANK repeat units lie at residues 38 to 66 (LMKA…KLDV), 67 to 96 (EGRS…DITT), 100 to 129 (AGRN…PTEH), 133 to 162 (QGRT…SVNA), 166 to 195 (DGRT…DVNS), and 199 to 228 (QNRT…DISL). Coiled coils occupy residues 286–374 (VKSH…NRFK) and 438–1386 (ENEI…IYRT). Residue K1035 forms a Glycyl lysine isopeptide (Lys-Gly) (interchain with G-Cter in SUMO2) linkage.

Component of the apoptosome complex, composed of APAF1, pro-caspase-9 and UACA. In the complex, it probably interacts directly with APAF1. Interacts with LGALS3, ARF6 and ACTB. Interacts with RAB39A. As to expression, highly expressed in skeletal muscle, heart, kidney and pancreas. Expressed in choroid, retina and epidermal melanocytes. Expressed in eye muscles and thyroid follicular cells.

The protein localises to the nucleus. It localises to the cytoplasm. It is found in the cytoskeleton. Functionally, regulates APAF1 expression and plays an important role in the regulation of stress-induced apoptosis. Promotes apoptosis by regulating three pathways, apoptosome up-regulation, LGALS3/galectin-3 down-regulation and NF-kappa-B inactivation. Regulates the redistribution of APAF1 into the nucleus after proapoptotic stress. Down-regulates the expression of LGALS3 by inhibiting NFKB1. Its function is as follows. Modulates isoactin dynamics to regulate the morphological alterations required for cell growth and motility. Interaction with ARF6 may modulate cell shape and motility after injury. May be involved in multiple neurite formation. The protein is Uveal autoantigen with coiled-coil domains and ankyrin repeats (UACA) of Homo sapiens (Human).